Here is a 391-residue protein sequence, read N- to C-terminus: Lysophosphatidylinositol acyltransferase 10 (391 aa).

Helical transmembrane passes span 10–30, 52–72, 97–119, 323–343, and 347–367; these read LLGW…NYII, AISY…GVRI, WMYM…KISL, LTSL…IFFV, and QLGF…YGGI.

The protein belongs to the 1-acyl-sn-glycerol-3-phosphate acyltransferase family. As to expression, expressed in seam cells, vulval epithelial cells and the major epithelial syncytium hyp7, and in several head neurons including AIY interneurons.

The protein resides in the endoplasmic reticulum membrane. The catalysed reaction is a 2-acyl-sn-glycero-3-phospho-D-myo-inositol + an acyl-CoA = a 1,2-diacyl-sn-glycero-3-phospho-(1D-myo-inositol) + CoA. The enzyme catalyses a 2-acyl-sn-glycero-3-phospho-D-myo-inositol + octadecanoyl-CoA = 1-octadecanoyl-2-acyl-sn-glycero-3-phospho-1D-myo-inositol + CoA. Its pathway is phospholipid metabolism; phosphatidylinositol metabolism. In terms of biological role, acyltransferase required for the fatty acid remodeling of phosphatidylinositol (1,2-diacyl-sn-glycero-3-phosphoinositol or PI). Mediates the conversion of lysophosphatidylinositol (2-acylglycerophosphatidylinositol or LPI) into PI (LPIAT activity). Has preference for saturated and mono-unsaturated fatty acids as acyl donors and sn-2-acyl lysoPI (2-acyl-sn-glycero-3-phospho-D-myo-inositol) as acyl acceptor. Contributes to the asymmetric cell division of epithelial cells. Asymmetric cell division is the fundamental mechanism by which multicellular organisms generate cell diversity. The sequence is that of Lysophosphatidylinositol acyltransferase 10 from Caenorhabditis elegans.